The chain runs to 180 residues: Major urinary protein 1 (180 aa).

The N-terminal stretch at 1–18 (MKMLLLLCLGLTLVCVHA) is a signal peptide. Cys82 and Cys175 form a disulfide bridge.

Belongs to the calycin superfamily. Lipocalin family. Abundant in the urine of adult male mice but absent from that of females.

The protein localises to the secreted. Its function is as follows. Binds pheromones that are released from drying urine of males. These pheromones affect the sexual behavior of females. The sequence is that of Major urinary protein 1 (Mup1) from Mus musculus (Mouse).